The primary structure comprises 341 residues: L-threonine 3-dehydrogenase (341 aa).

Cys38 is a Zn(2+) binding site. Active-site charge relay system residues include Thr40 and His43. His63, Glu64, Cys93, Cys96, Cys99, and Cys107 together coordinate Zn(2+). NAD(+) is bound by residues Ile175, Asp195, Arg200, 262 to 264 (LGI), and 286 to 287 (IY).

The protein belongs to the zinc-containing alcohol dehydrogenase family. In terms of assembly, homotetramer. It depends on Zn(2+) as a cofactor.

The protein resides in the cytoplasm. It carries out the reaction L-threonine + NAD(+) = (2S)-2-amino-3-oxobutanoate + NADH + H(+). It functions in the pathway amino-acid degradation; L-threonine degradation via oxydo-reductase pathway; glycine from L-threonine: step 1/2. Its function is as follows. Catalyzes the NAD(+)-dependent oxidation of L-threonine to 2-amino-3-ketobutyrate. This chain is L-threonine 3-dehydrogenase, found in Shigella dysenteriae serotype 1 (strain Sd197).